The primary structure comprises 551 residues: HTH-type transcriptional regulator SgrR (551 aa).

The region spanning 1-116 is the HTH marR-type domain; that stretch reads MPSARLQQQF…LVSHLGRSFR (116 aa). A DNA-binding region (H-T-H motif) is located at residues 26–49; that stretch reads LNELAALLSCSRRHMRTLLNTMQD. The tract at residues 163–492 is solute-binding; that stretch reads ELEADIAHHW…IDWQADAARW (330 aa).

Functionally, activates the small RNA gene sgrS under glucose-phosphate stress conditions as well as yfdZ. Represses its own transcription under both stress and non-stress conditions. Might act as a sensor of the intracellular accumulation of phosphoglucose by binding these molecules in its C-terminal solute-binding domain. The chain is HTH-type transcriptional regulator SgrR from Escherichia coli O6:K15:H31 (strain 536 / UPEC).